Reading from the N-terminus, the 954-residue chain is Mycolic acid-containing lipids exporter MmpL11 (954 aa).

The next 12 helical transmembrane spans lie at 11-31 (FRWA…YLAL), 188-208 (IVLI…LPLV), 214-234 (VVVT…SVFV), 235-255 (TSTV…FILM), 279-299 (GLAV…IYLI), 312-334 (ILAV…ATFG), 373-393 (AIAA…MVLG), 529-549 (TQPL…LVSI), 559-579 (VLMT…VFQW), 597-617 (IPPL…IFLL), 648-668 (AALI…PLVA), and 670-690 (LGVA…LVLV).

Its subcellular location is the cell inner membrane. Contributes to cell wall biosynthesis and biofilm formation. Transports the mycolic acid-containing lipids monomeromycolyl diacylglycerol (MMDAG) and mycolate ester wax (WE) to the bacterial surface. This is Mycolic acid-containing lipids exporter MmpL11 from Mycolicibacterium smegmatis (strain ATCC 700084 / mc(2)155) (Mycobacterium smegmatis).